The primary structure comprises 316 residues: Arabinooligosaccharides transport system permease protein AraP (316 aa).

The next 7 helical transmembrane spans lie at 32–52 (VVPYVLISPFILSFIVLSFYP), 94–114 (TYMILTVVILVSIPMLFAVLL), 128–148 (ALFLPALTSVIVAGMVFRLMF), 178–198 (MFLMVVLASWRWMGINILYFL), 224–244 (FYVTLPFLKPVTIFVTTISVI), 254–274 (FVFWEAGSPGNIGLTIVGYLY), and 283–303 (MGFGAAIGVVLMLIIFVISIT). The ABC transmembrane type-1 domain occupies 89 to 304 (LQNTTTYMIL…LIIFVISITQ (216 aa)).

Belongs to the binding-protein-dependent transport system permease family. MalFG subfamily. In terms of assembly, the complex is composed of two ATP-binding proteins (MsmX), two transmembrane proteins (AraP and AraQ) and a solute-binding protein (AraN).

It is found in the cell membrane. In terms of biological role, part of the ABC transporter complex AraNPQ involved in the uptake of arabinooligosaccharides. Responsible for the translocation of the substrate across the membrane. The protein is Arabinooligosaccharides transport system permease protein AraP (araP) of Halalkalibacterium halodurans (strain ATCC BAA-125 / DSM 18197 / FERM 7344 / JCM 9153 / C-125) (Bacillus halodurans).